The primary structure comprises 1593 residues: Nischarin (1593 aa).

Residues 1–134 (MAAATLSFGP…GVTAALAEEL (134 aa)) form a necessary for binding to phosphoinositide-3-P; not sufficient for targeting to endosomes region. The 111-residue stretch at 12–122 (REAEPAKEAR…AHFLHFHLYE (111 aa)) folds into the PX domain. Residues 121-695 (YEVNGVTAAL…ERLALEWALG (575 aa)) form a necessary for homooligomerization and targeting to endosomes region. The interval 246–869 (MSVRFSATSM…LVYSDKRMVQ (624 aa)) is interaction with PAK1. LRR repeat units lie at residues 290 to 311 (ALTT…VKLI), 313 to 334 (KIEY…QHLY), 335 to 356 (NLVH…HTKL), 358 to 379 (NVKT…HKLY), 380 to 401 (SLVN…KSIG), and 405 to 426 (CLER…RTKV). The segment covering 466-480 (SKLSNTEKKAGEDFR) has biased composition (basic and acidic residues). A disordered region spans residues 466-499 (SKLSNTEKKAGEDFRLPPAPCIRPGGSPPAAPAS). Over residues 482 to 496 (PPAPCIRPGGSPPAA) the composition is skewed to pro residues. Ser543, Ser545, and Ser548 each carry phosphoserine. Residues 624–694 (IEAANQREEA…EERLALEWAL (71 aa)) adopt a coiled-coil conformation. The tract at residues 629–687 (QREEAHGEQGEEEEEEEEEEDVAENRYFEMGPPDAEEEEGSGQGEEDEEDEDEEAEEER) is disordered. Composition is skewed to acidic residues over residues 638 to 650 (GEEE…EEDV) and 662 to 685 (DAEE…EAEE). An interaction with LIMK region spans residues 661–869 (PDAEEEEGSG…LVYSDKRMVQ (209 aa)). Residues 709-807 (KVLWCFLIHV…ANLHEFHADL (99 aa)) are interaction with ITGA5. The tract at residues 1016 to 1185 (NPSAKPRNQP…PAGGPAPAEA (170 aa)) is disordered. Composition is skewed to low complexity over residues 1038-1069 (ETPA…LAPV) and 1081-1158 (AEAP…APAP). Repeat copies occupy residues 1081–1086 (AEAPAA), 1087–1092 (AEAPAA), 1093–1098 (AEAPAA), 1099–1104 (AEAPAA), 1105–1110 (AEAPAA), 1111–1116 (AEAPAA), 1123–1128 (AEAPAA), 1129–1134 (AEAPAA), 1135–1140 (AEAPAA), and 1141–1146 (AEAPAA). Residues 1081–1146 (AEAPAAAEAP…APAAAEAPAA (66 aa)) are 10 X 6 AA tandem repeat of A-E-A-P-A-A. Residues 1159–1179 (NQAPAPARGPAPARGPAPAGG) are compositionally biased toward pro residues. At Thr1371 the chain carries Phosphothreonine. Ser1373 carries the post-translational modification Phosphoserine.

As to quaternary structure, homooligomer. Interacts with GRB2. Interacts with PIK3R1; probably associates with the PI3-kinase complex. Interacts with IRS4. Found in a complex with ITGA5 and PAK1. Found in a complex with LIMK1 and PAK1. Interacts with ITGA5 (via cytoplasmic domain); this interaction is direct. Interacts with PAK1 (via kinase domain); this interaction is direct and is increased upon activation of PAK1. Interacts with LIMK1 (via PDZ and kinase domain); this interaction is direct. Interacts with LIMK2; this interaction depends on LIMK2 activity. Interacts with RAC1 (activated state). Interacts with STK11; this interaction may increase STK11 activity. As to expression, highly expressed in brain and kidney. Moderately expressed in heart, liver, lung and skeletal muscle. Not detected in spleen and testis.

The protein localises to the cell membrane. It localises to the cytoplasm. Its subcellular location is the early endosome. The protein resides in the recycling endosome. Functionally, acts either as the functional imidazoline-1 receptor (I1R) candidate or as a membrane-associated mediator of the I1R signaling. Binds numerous imidazoline ligands that induces initiation of cell-signaling cascades triggering to cell survival, growth and migration. Its activation by the agonist rilmenidine induces an increase in phosphorylation of mitogen-activated protein kinases MAPK1 and MAPK3 in rostral ventrolateral medulla (RVLM) neurons that exhibited rilmenidine-evoked hypotension. Blocking its activation with efaroxan abolished rilmenidine-induced mitogen-activated protein kinase phosphorylation in RVLM neurons. Acts as a modulator of Rac-regulated signal transduction pathways. Suppresses Rac1-stimulated cell migration by interacting with PAK1 and inhibiting its kinase activity. Also blocks Pak-independent Rac signaling by interacting with RAC1 and inhibiting Rac1-stimulated NF-kB response element and cyclin D1 promoter activation. Also inhibits LIMK1 kinase activity by reducing LIMK1 'Tyr-508' phosphorylation. Inhibits Rac-induced cell migration and invasion in breast and colon epithelial cells. Inhibits lamellipodia formation, when overexpressed. Plays a role in protection against apoptosis. Involved in association with IRS4 in the enhancement of insulin activation of MAPK1 and MAPK3. When overexpressed, induces a redistribution of cell surface ITGA5 integrin to intracellular endosomal structures. This is Nischarin (Nisch) from Mus musculus (Mouse).